Here is a 136-residue protein sequence, read N- to C-terminus: Translation initiation factor 5A (136 aa).

A Hypusine modification is found at lysine 36.

Belongs to the eIF-5A family.

It is found in the cytoplasm. Functions by promoting the formation of the first peptide bond. The sequence is that of Translation initiation factor 5A (eIF5A) from Hyperthermus butylicus (strain DSM 5456 / JCM 9403 / PLM1-5).